The following is a 772-amino-acid chain: TBC domain-containing protein C4G8.04 (772 aa).

The span at 143 to 161 (SFFPSSQEPSIPENPSSLT) shows a compositional bias: polar residues. Disordered stretches follow at residues 143–163 (SFFP…LTGE) and 275–294 (KFFR…TFVS). Over residues 275-291 (KFFRSSPRCSTPSVSST) the composition is skewed to low complexity. Threonine 395 carries the phosphothreonine modification. A Rab-GAP TBC domain is found at 504–693 (GVPLCYKAKV…RIFDMLFCDG (190 aa)).

The chain is TBC domain-containing protein C4G8.04 from Schizosaccharomyces pombe (strain 972 / ATCC 24843) (Fission yeast).